The sequence spans 258 residues: ADP-ribose glycohydrolase MACROD1 (258 aa).

An N6-succinyllysine mark is found at Lys-29, Lys-36, and Lys-62. A Glycyl lysine isopeptide (Lys-Gly) (interchain with G-Cter in SUMO2) cross-link involves residue Lys-71. The Macro domain occupies 74 to 255 (NPKYKKDKQL…IYQERLPHYF (182 aa)). Residue 92–94 (GDI) participates in substrate binding. N6-acetyllysine is present on Lys-96. Substrate contacts are provided by residues 105-107 (AAN), 112-117 (GGGGVD), 200-206 (ISTGVFG), and Phe-239.

The protein belongs to the MacroD-type family. MacroD1/2-like subfamily. In terms of assembly, interacts with ESR1; Interacts in a manner that is estrogen independent but is enhanced by estrogen. Interacts (via macro domain) with AR.

It is found in the nucleus. It catalyses the reaction 3''-O-acetyl-ADP-D-ribose + H2O = ADP-D-ribose + acetate + H(+). The enzyme catalyses 2''-O-acetyl-ADP-D-ribose + H2O = ADP-D-ribose + acetate + H(+). The catalysed reaction is 4-O-(ADP-D-ribosyl)-L-aspartyl-[protein] + H2O = L-aspartyl-[protein] + ADP-D-ribose + H(+). It carries out the reaction 5-O-(ADP-D-ribosyl)-L-glutamyl-[protein] + H2O = L-glutamyl-[protein] + ADP-D-ribose + H(+). It catalyses the reaction alpha-NAD(+) + H2O = ADP-D-ribose + nicotinamide + H(+). With respect to regulation, subject to competitive inhibition by the product ADP-ribose. Functionally, removes ADP-ribose from aspartate and glutamate residues in proteins bearing a single ADP-ribose moiety. Inactive towards proteins bearing poly-ADP-ribose. Deacetylates O-acetyl-ADP ribose, a signaling molecule generated by the deacetylation of acetylated lysine residues in histones and other proteins. Plays a role in estrogen signaling. Binds to androgen receptor (AR) and amplifies the transactivation function of AR in response to androgen. May play an important role in carcinogenesis and/or progression of hormone-dependent cancers by feed-forward mechanism that activates ESR1 transactivation. Could be an ESR1 coactivator, providing a positive feedback regulatory loop for ESR1 signal transduction. Could be involved in invasive growth by down-regulating CDH1 in endometrial cancer cells. Enhances ESR1-mediated transcription activity. The protein is ADP-ribose glycohydrolase MACROD1 (Macrod1) of Rattus norvegicus (Rat).